The chain runs to 339 residues: Serpentine receptor class alpha-24 (339 aa).

7 helical membrane-spanning segments follow: residues 26 to 46 (ITVK…YYFA), 65 to 82 (LILL…TTML), 112 to 132 (ELFV…SLAF), 151 to 171 (VSIF…YVGL), 199 to 219 (FRTL…YLSV), 248 to 268 (VCIL…GVNY), and 284 to 304 (LAPF…VIHC).

It belongs to the nematode receptor-like protein sra family.

Its subcellular location is the membrane. This is Serpentine receptor class alpha-24 (sra-24) from Caenorhabditis elegans.